The primary structure comprises 159 residues: 6,7-dimethyl-8-ribityllumazine synthase (159 aa).

Residues Trp30, 64 to 66 (TFE), and 88 to 90 (CVI) contribute to the 5-amino-6-(D-ribitylamino)uracil site. 93–94 (ET) lines the (2S)-2-hydroxy-3-oxobutyl phosphate pocket. The active-site Proton donor is His96. Phe121 is a 5-amino-6-(D-ribitylamino)uracil binding site. Arg135 contributes to the (2S)-2-hydroxy-3-oxobutyl phosphate binding site.

This sequence belongs to the DMRL synthase family.

The enzyme catalyses (2S)-2-hydroxy-3-oxobutyl phosphate + 5-amino-6-(D-ribitylamino)uracil = 6,7-dimethyl-8-(1-D-ribityl)lumazine + phosphate + 2 H2O + H(+). Its pathway is cofactor biosynthesis; riboflavin biosynthesis; riboflavin from 2-hydroxy-3-oxobutyl phosphate and 5-amino-6-(D-ribitylamino)uracil: step 1/2. Its function is as follows. Catalyzes the formation of 6,7-dimethyl-8-ribityllumazine by condensation of 5-amino-6-(D-ribitylamino)uracil with 3,4-dihydroxy-2-butanone 4-phosphate. This is the penultimate step in the biosynthesis of riboflavin. The protein is 6,7-dimethyl-8-ribityllumazine synthase of Cytophaga hutchinsonii (strain ATCC 33406 / DSM 1761 / CIP 103989 / NBRC 15051 / NCIMB 9469 / D465).